We begin with the raw amino-acid sequence, 583 residues long: CTP synthase (583 aa).

The interval 1–278 is amidoligase domain; it reads MRRHPQTATK…DAFVVRRLNL (278 aa). A CTP-binding site is contributed by S20. UTP is bound at residue S20. ATP-binding positions include 21-26 and D78; that span reads SLGKGL. Mg(2+)-binding residues include D78 and E152. CTP contacts are provided by residues 159–161, 199–204, and K235; these read DIE and KTKPTQ. UTP-binding positions include 199–204 and K235; that span reads KTKPTQ. Residues 303-551 form the Glutamine amidotransferase type-1 domain; sequence RIALVGKYVE…VKAAIDYKEG (249 aa). G366 is an L-glutamine binding site. C393 acts as the Nucleophile; for glutamine hydrolysis in catalysis. Residues 394 to 397, E416, and R477 each bind L-glutamine; that span reads LGLQ. Residues H524 and E526 contribute to the active site. A disordered region spans residues 559–583; the sequence is PERVSNGAERRDQVGQSIPEPANRG.

This sequence belongs to the CTP synthase family. As to quaternary structure, homotetramer.

It carries out the reaction UTP + L-glutamine + ATP + H2O = CTP + L-glutamate + ADP + phosphate + 2 H(+). The enzyme catalyses L-glutamine + H2O = L-glutamate + NH4(+). The catalysed reaction is UTP + NH4(+) + ATP = CTP + ADP + phosphate + 2 H(+). Its pathway is pyrimidine metabolism; CTP biosynthesis via de novo pathway; CTP from UDP: step 2/2. Its activity is regulated as follows. Allosterically activated by GTP, when glutamine is the substrate; GTP has no effect on the reaction when ammonia is the substrate. The allosteric effector GTP functions by stabilizing the protein conformation that binds the tetrahedral intermediate(s) formed during glutamine hydrolysis. Inhibited by the product CTP, via allosteric rather than competitive inhibition. In terms of biological role, catalyzes the ATP-dependent amination of UTP to CTP with either L-glutamine or ammonia as the source of nitrogen. Regulates intracellular CTP levels through interactions with the four ribonucleotide triphosphates. The sequence is that of CTP synthase from Mycobacterium marinum (strain ATCC BAA-535 / M).